Reading from the N-terminus, the 131-residue chain is Ribonuclease VapC30 (131 aa).

The PINc domain occupies 1–129 (MVIDTSALVA…FQHTDIATVA (129 aa)). 2 residues coordinate Mg(2+): aspartate 4 and aspartate 99.

It belongs to the PINc/VapC protein family. Mg(2+) is required as a cofactor.

Functionally, toxic component of a type II toxin-antitoxin (TA) system. An RNase. Its toxic effect is neutralized by coexpression with cognate antitoxin VapB30. This is Ribonuclease VapC30 from Mycobacterium tuberculosis (strain CDC 1551 / Oshkosh).